The chain runs to 1055 residues: Focal adhesion kinase 1 (1055 aa).

A disordered region spans residues 1–29; the sequence is MAAAYLDPNLNHTPSSSTKTHLGTGTERS. Alanine 2 bears the N-acetylalanine mark. Tyrosine 5 bears the Phosphotyrosine mark. Residues 10-27 are compositionally biased toward polar residues; it reads LNHTPSSSTKTHLGTGTE. At threonine 13 the chain carries Phosphothreonine. Serine 29 and serine 54 each carry phosphoserine. Positions 35–355 constitute an FERM domain; sequence RVLKVFHYFE…GYCRLVNGAT (321 aa). Lysine 152 participates in a covalent cross-link: Glycyl lysine isopeptide (Lys-Gly) (interchain with G-Cter in SUMO). Residue tyrosine 397 is modified to Phosphotyrosine; by autocatalysis. Tyrosine 407 bears the Phosphotyrosine mark. The 259-residue stretch at 422 to 680 folds into the Protein kinase domain; that stretch reads IELGRCIGEG…ELKAQLSTIL (259 aa). ATP contacts are provided by residues 428-434, lysine 454, and 500-502; these read IGEGQFG and ELC. Residue aspartate 546 is the Proton acceptor of the active site. Tyrosine 570 and tyrosine 576 each carry phosphotyrosine. A Phosphotyrosine; by RET and SRC modification is found at tyrosine 577. Serine 580 carries the phosphoserine modification. Over residues 685–697 the composition is skewed to basic and acidic residues; sequence VQQEERMRMESRR. 2 disordered regions span residues 685-734 and 837-923; these read VQQE…PSPQ and VRLS…LDRS. Residues 707 to 1055 are interaction with TGFB1I1; sequence GSDEAPPKPS…LKMLGQTRPH (349 aa). Phosphoserine is present on serine 722. Position 732 is a phosphoserine; by CDK5 (serine 732). Basic and acidic residues predominate over residues 837–849; it reads VRLSRGSIDREDG. A Phosphoserine modification is found at serine 843. The residue at position 861 (tyrosine 861) is a Phosphotyrosine. Positions 869–880 are enriched in pro residues; that stretch reads PAAPPKKPPRPG. Polar residues predominate over residues 886–896; sequence SNLSSISSPAE. Serine 913 is modified (phosphoserine). The tract at residues 915-1055 is interaction with ARHGEF28; the sequence is PPTANLDRSN…LKMLGQTRPH (141 aa). Threonine 917 is modified (phosphothreonine). Tyrosine 928 carries the post-translational modification Phosphotyrosine.

It belongs to the protein kinase superfamily. Tyr protein kinase family. FAK subfamily. As to quaternary structure, interacts with GIT1. Component of a complex that contains at least FER, CTTN and PTK2/FAK1. Interacts with BMX. Interacts with STEAP4. Interacts with ZFYVE21. Interacts with ESR1. Interacts with PIK3R1 or PIK3R2. Interacts with FGR, FLT4 and RET. Interacts with EPHA2 in resting cells; activation of EPHA2 recruits PTPN11, leading to dephosphorylation of PTK2/FAK1 and dissociation of the complex. Interacts with EPHA1 (kinase activity-dependent). Interacts with P53/TP53. Interacts (via first Pro-rich region) with CAS family members (via SH3 domain), including BCAR1, BCAR3, and CASS4. Interacts with NEDD9 (via SH3 domain). Interacts with TGFB1I1. Interacts with SRC, GRB2 and GRB7. Interacts with ARHGEF28. Interacts with SHB. Part of a complex composed of THSD1, PTK2/FAK1, TLN1 and VCL. Interacts with PXN and TLN1. Interacts with SORBS1. Interacts with STAT1. Interacts with WASL. Interacts with ARHGAP26 and SHC1. Interacts with RB1CC1; this inhibits PTK2/FAK1 activity and activation of downstream signaling pathways. Interacts with ARHGEF7. Interacts with MDM2. Interacts with PIAS1. Interacts with DCC. Interacts with LPXN (via LD motif 3). Interacts with MISP. Interacts with EMP2; regulates PTK2 activation and localization. Interacts with DSCAM. Interacts with AMBRA1. Interacts (when tyrosine-phosphorylated) with tensin TNS1; the interaction is increased by phosphorylation of TNS1. In terms of processing, phosphorylated on tyrosine residues upon activation, e.g. upon integrin signaling. Tyr-397 is the major autophosphorylation site, but other kinases can also phosphorylate this residue. Phosphorylation at Tyr-397 promotes interaction with SRC and SRC family members, leading to phosphorylation at Tyr-576, Tyr-577 and at additional tyrosine residues. FGR promotes phosphorylation at Tyr-397 and Tyr-576. FER promotes phosphorylation at Tyr-577, Tyr-861 and Tyr-928, even when cells are not adherent. Tyr-397, Tyr-576 and Ser-722 are phosphorylated only when cells are adherent. Phosphorylation at Tyr-397 is important for interaction with BMX, PIK3R1 and SHC1. Phosphorylation at Tyr-928 is important for interaction with GRB2. Dephosphorylated by PTPN11; PTPN11 is recruited to PTK2 via EPHA2 (tyrosine phosphorylated). Microtubule-induced dephosphorylation at Tyr-397 is crucial for the induction of focal adhesion disassembly; this dephosphorylation could be catalyzed by PTPN11 and regulated by ZFYVE21. Phosphorylation on tyrosine residues is enhanced by NTN1. Post-translationally, sumoylated; this enhances autophosphorylation.

It localises to the cell junction. It is found in the focal adhesion. Its subcellular location is the cell membrane. The protein resides in the cytoplasm. The protein localises to the perinuclear region. It localises to the cell cortex. It is found in the cytoskeleton. Its subcellular location is the microtubule organizing center. The protein resides in the centrosome. The protein localises to the nucleus. It localises to the cilium basal body. The enzyme catalyses L-tyrosyl-[protein] + ATP = O-phospho-L-tyrosyl-[protein] + ADP + H(+). With respect to regulation, subject to autoinhibition, mediated by interactions between the FERM domain and the kinase domain. Activated by autophosphorylation at Tyr-397. This promotes interaction with SRC and phosphorylation at Tyr-576 and Tyr-577 in the kinase activation loop by SRC. Phosphorylation at Tyr-397, Tyr-576 and Tyr-577 is required for maximal kinase activity. Its function is as follows. Non-receptor protein-tyrosine kinase that plays an essential role in regulating cell migration, adhesion, spreading, reorganization of the actin cytoskeleton, formation and disassembly of focal adhesions and cell protrusions, cell cycle progression, cell proliferation and apoptosis. Required for early embryonic development and placenta development. Required for embryonic angiogenesis, normal cardiomyocyte migration and proliferation, and normal heart development. Regulates axon growth and neuronal cell migration, axon branching and synapse formation; required for normal development of the nervous system. Plays a role in osteogenesis and differentiation of osteoblasts. Functions in integrin signal transduction, but also in signaling downstream of numerous growth factor receptors, G-protein coupled receptors (GPCR), EPHA2, netrin receptors and LDL receptors. Forms multisubunit signaling complexes with SRC and SRC family members upon activation; this leads to the phosphorylation of additional tyrosine residues, creating binding sites for scaffold proteins, effectors and substrates. Regulates numerous signaling pathways. Promotes activation of phosphatidylinositol 3-kinase and the AKT1 signaling cascade. Promotes activation of MAPK1/ERK2, MAPK3/ERK1 and the MAP kinase signaling cascade. Promotes localized and transient activation of guanine nucleotide exchange factors (GEFs) and GTPase-activating proteins (GAPs), and thereby modulates the activity of Rho family GTPases. Signaling via CAS family members mediates activation of RAC1. Phosphorylates NEDD9 following integrin stimulation. Recruits the ubiquitin ligase MDM2 to P53/TP53 in the nucleus, and thereby regulates P53/TP53 activity, P53/TP53 ubiquitination and proteasomal degradation. Phosphorylates SRC; this increases SRC kinase activity. Phosphorylates ACTN1, ARHGEF7, GRB7, RET and WASL. Promotes phosphorylation of PXN and STAT1; most likely PXN and STAT1 are phosphorylated by a SRC family kinase that is recruited to autophosphorylated PTK2/FAK1, rather than by PTK2/FAK1 itself. Promotes phosphorylation of BCAR1; GIT2 and SHC1; this requires both SRC and PTK2/FAK1. Promotes phosphorylation of BMX and PIK3R1. Functionally, does not contain a kinase domain and inhibits PTK2/FAK1 phosphorylation and signaling. Its enhanced expression can attenuate the nuclear accumulation of LPXN and limit its ability to enhance serum response factor (SRF)-dependent gene transcription. This chain is Focal adhesion kinase 1, found in Rattus norvegicus (Rat).